A 144-amino-acid polypeptide reads, in one-letter code: tRNA-specific adenosine deaminase (144 aa).

Residues 1–116 form the CMP/dCMP-type deaminase domain; sequence MEQALKQAGI…SNLRYFNSSV (116 aa). Position 48 (histidine 48) interacts with Zn(2+). The active-site Proton donor is the glutamate 50. 2 residues coordinate Zn(2+): cysteine 78 and cysteine 81.

The protein belongs to the cytidine and deoxycytidylate deaminase family. In terms of assembly, homodimer. Requires Zn(2+) as cofactor.

The catalysed reaction is adenosine(34) in tRNA + H2O + H(+) = inosine(34) in tRNA + NH4(+). Functionally, catalyzes the deamination of adenosine to inosine at the wobble position 34 of tRNA(Arg2). The protein is tRNA-specific adenosine deaminase of Rickettsia felis (strain ATCC VR-1525 / URRWXCal2) (Rickettsia azadi).